Here is a 250-residue protein sequence, read N- to C-terminus: Probable fimbrial chaperone YfcS (250 aa).

Positions 1 to 28 (MSDLLCSAKLGAMTLALLLSATSLSALA) are cleaved as a signal peptide.

Belongs to the periplasmic pilus chaperone family.

The protein resides in the periplasm. In terms of biological role, part of the yfcOPQRSUV fimbrial operon. Could contribute to adhesion to various surfaces in specific environmental niches. Increases adhesion to eukaryotic T24 bladder epithelial cells in the absence of fim genes. This is Probable fimbrial chaperone YfcS (yfcS) from Escherichia coli (strain K12).